The sequence spans 129 residues: Small ribosomal subunit protein uS9 (129 aa).

Belongs to the universal ribosomal protein uS9 family.

The polypeptide is Small ribosomal subunit protein uS9 (Helicobacter pylori (strain HPAG1)).